The chain runs to 352 residues: MAGFTDLREKLKSMTPHRDKVFEYSNGEKRKYRESDDDESEYEERRDAEARRVKSGIKQASIFTLEECARIEAKIDEVVAKADKGLYREHTVDRAPLRNKYFFGEGYTYGAQLEKRGPGQERLYSKGEVDDIPDWVHELVIDRLVTHGVIPEGFVNSAVINDYQPGGCIVSHVDPIHIFERPIVSVSFFSDSALCFGCKFLFKPIRVSEPVLHLPVRRGSVTVLSGYAADDITHCIRPQDIKERRAVIILRKTRADAPRLDSNSLSPSIVSPKRRHILKAKRSHRKADPDAAHRPRVLEMDKELQRRSLSSRQRRHDDGSSENSWRRADDREPAARYTHDHAPTRRVKMRRH.

The span at 18 to 34 (RDKVFEYSNGEKRKYRE) shows a compositional bias: basic and acidic residues. A disordered region spans residues 18–47 (RDKVFEYSNGEKRKYRESDDDESEYEERRD). Tyr-107 is an active-site residue. Residues Asn-161, Tyr-163, and His-172 each contribute to the 2-oxoglutarate site. The Fe cation site is built by His-172, Asp-174, and His-234. Cys-198 and Cys-235 are joined by a disulfide. 2 residues coordinate 2-oxoglutarate: His-234 and Arg-245. The segment at 260–352 (LDSNSLSPSI…PTRRVKMRRH (93 aa)) is disordered. Residues 272 to 285 (PKRRHILKAKRSHR) show a composition bias toward basic residues. Composition is skewed to basic and acidic residues over residues 286-306 (KADP…ELQR) and 315-343 (RHDD…DHAP).

It belongs to the alkB family. In terms of assembly, monomer. The cofactor is Fe(2+).

It is found in the nucleus speckle. The catalysed reaction is an N(6)-methyladenosine in mRNA + 2-oxoglutarate + O2 = an adenosine in mRNA + formaldehyde + succinate + CO2. Functionally, dioxygenase that specifically demethylates N(6)-methyladenosine (m6A) RNA, the most prevalent internal modification of messenger RNA (mRNA) in higher eukaryotes. Demethylates RNA by oxidative demethylation, which requires molecular oxygen, alpha-ketoglutarate and iron. Demethylation of m6A mRNA affects mRNA processing, translation and export. This is RNA demethylase ALKBH5 (alkbh5) from Danio rerio (Zebrafish).